Reading from the N-terminus, the 110-residue chain is UPF0060 membrane protein Pmen_1247 (110 aa).

The next 4 membrane-spanning stretches (helical) occupy residues 5 to 25 (LWFL…WMWL), 31 to 51 (AWWI…LTRV), 59 to 79 (AYAA…ALIE), and 84 to 104 (MLSD…ILFA).

This sequence belongs to the UPF0060 family.

It is found in the cell inner membrane. This Ectopseudomonas mendocina (strain ymp) (Pseudomonas mendocina) protein is UPF0060 membrane protein Pmen_1247.